The chain runs to 192 residues: Der GTPase-activating protein YihI (192 aa).

The interval 1–80 is disordered; that stretch reads MSRTKKTRRI…KAAVKEVKDP (80 aa). 3 stretches are compositionally biased toward basic and acidic residues: residues 9–25, 37–48, and 65–80; these read RITDIMPARKADKKPEQ, TRYELDAKAREE, and DPAEQKKAAVKEVKDP.

It belongs to the YihI family. Interacts with Der.

In terms of biological role, a GTPase-activating protein (GAP) that modifies Der/EngA GTPase function. May play a role in ribosome biogenesis. This chain is Der GTPase-activating protein YihI, found in Actinobacillus pleuropneumoniae serotype 7 (strain AP76).